We begin with the raw amino-acid sequence, 395 residues long: Vibriobactin-specific isochorismate synthase (395 aa).

It belongs to the isochorismate synthase family.

The enzyme catalyses chorismate = isochorismate. Its pathway is siderophore biosynthesis; vibriobactin biosynthesis. The chain is Vibriobactin-specific isochorismate synthase (vibC) from Vibrio cholerae serotype O1 (strain ATCC 39315 / El Tor Inaba N16961).